Here is a 599-residue protein sequence, read N- to C-terminus: NADH-quinone oxidoreductase subunit C/D (599 aa).

The segment at 1 to 189 (MTDLTTHDLA…DPFVLTKQKE (189 aa)) is NADH dehydrogenase I subunit C. The segment at 213–599 (DFMFLNLGPN…IDFVMSDVDR (387 aa)) is NADH dehydrogenase I subunit D.

In the N-terminal section; belongs to the complex I 30 kDa subunit family. The protein in the C-terminal section; belongs to the complex I 49 kDa subunit family. As to quaternary structure, NDH-1 is composed of 13 different subunits. Subunits NuoB, CD, E, F, and G constitute the peripheral sector of the complex.

The protein resides in the cell inner membrane. The catalysed reaction is a quinone + NADH + 5 H(+)(in) = a quinol + NAD(+) + 4 H(+)(out). NDH-1 shuttles electrons from NADH, via FMN and iron-sulfur (Fe-S) centers, to quinones in the respiratory chain. The immediate electron acceptor for the enzyme in this species is believed to be ubiquinone. Couples the redox reaction to proton translocation (for every two electrons transferred, four hydrogen ions are translocated across the cytoplasmic membrane), and thus conserves the redox energy in a proton gradient. The sequence is that of NADH-quinone oxidoreductase subunit C/D from Pectobacterium carotovorum subsp. carotovorum (strain PC1).